The sequence spans 427 residues: Inward rectifier potassium channel 2 (427 aa).

The Cytoplasmic portion of the chain corresponds to 1-81 (MGSVRTNRYS…IFTTCVDIRW (81 aa)). S-nitrosocysteine is present on Cys76. Residues 82–106 (RWMLVIFCLAFVLSWLFFGCVFWLI) traverse the membrane as a helical segment. At 107–128 (ALLHGDLDASKEGKACVSEVNS) the chain is on the extracellular side. Residues 129–140 (FTAAFLFSIETQ) constitute an intramembrane region (helical; Pore-forming). An intramembrane region (pore-forming) is located at residues 141-147 (TTIGYGF). Residues 142–147 (TIGYGF) carry the Selectivity filter motif. Residues 148–156 (RCVTDECPI) lie on the Extracellular side of the membrane. The helical transmembrane segment at 157–178 (AVFMVVFQSIVGCIIDAFIIGA) threads the bilayer. The Cytoplasmic segment spans residues 179–427 (VMAKMAKPKK…PRPLRRESEI (249 aa)). Positions 181 to 208 (AKMAKPKKRNETLVFSHNAVIAMRDGKL) are polyphosphoinositide (PIP2)-binding. Positions 384-427 (SKEEDDSENGVPESTSTDTPPDIDLHNQASVPLEPRPLRRESEI) are disordered. The PDZ-binding motif lies at 425 to 427 (SEI).

Belongs to the inward rectifier-type potassium channel (TC 1.A.2.1) family. KCNJ2 subfamily. Homotetramer. Homomultimeric and heteromultimeric association with KCNJ4/Kir2.3. Can form heteromeric channels with Kir2.6/KCNJ18. Associates, via its PDZ-recognition domain, with a complex containing LIN7A, LIN7B, LIN7C, DLG1, CASK and APBA1. Post-translationally, S-nitrosylation increases the open probability and inward rectifying currents.

The protein resides in the cell membrane. Its subcellular location is the sarcolemma. It localises to the T-tubule. The catalysed reaction is K(+)(in) = K(+)(out). With respect to regulation, activated by phosphatidylinositol 4,5 biphosphate (PtdIns(4,5)P2). In terms of biological role, inward rectifier potassium channels are characterized by a greater tendency to allow potassium to flow into the cell rather than out of it. Their voltage dependence is regulated by the concentration of extracellular potassium; as external potassium is raised, the voltage range of the channel opening shifts to more positive voltages. The inward rectification is mainly due to the blockage of outward current by internal magnesium. Can be blocked by extracellular barium or cesium. Probably participates in establishing action potential waveform and excitability of neuronal and muscle tissues. The chain is Inward rectifier potassium channel 2 (KCNJ2) from Macaca mulatta (Rhesus macaque).